Here is a 175-residue protein sequence, read N- to C-terminus: RNA pyrophosphohydrolase (175 aa).

The 152-residue stretch at 8–159 folds into the Nudix hydrolase domain; the sequence is PYRTCVGMML…KRPVYERVVK (152 aa). Residues 47 to 68 carry the Nudix box motif; it reads GGVDPGEDPWTAAKRELYEETS.

This sequence belongs to the Nudix hydrolase family. RppH subfamily. The cofactor is a divalent metal cation.

Functionally, accelerates the degradation of transcripts by removing pyrophosphate from the 5'-end of triphosphorylated RNA, leading to a more labile monophosphorylated state that can stimulate subsequent ribonuclease cleavage. This is RNA pyrophosphohydrolase from Rhodopseudomonas palustris (strain BisB18).